Consider the following 457-residue polypeptide: Multidrug resistance protein MdtK (457 aa).

The next 12 helical transmembrane spans lie at 11–31 (LLAL…MGFV), 53–73 (IWLP…PVVA), 93–113 (WLAG…GYII), 127–147 (AVGY…FQVA), 160–180 (GMVM…IFIY), 191–211 (VGCG…MLWW), 243–263 (LPIA…ALLV), 276–296 (IALN…AAVT), 316–336 (RTGV…TVLM), 350–370 (VVLL…SDSI), 387–407 (IFFI…YLLA), and 418–438 (PAGF…MMML).

Belongs to the multi antimicrobial extrusion (MATE) (TC 2.A.66.1) family. MdtK subfamily.

The protein resides in the cell inner membrane. In terms of biological role, multidrug efflux pump that functions probably as a Na(+)/drug antiporter. The chain is Multidrug resistance protein MdtK from Klebsiella pneumoniae (strain 342).